The chain runs to 199 residues: Hematopoietic prostaglandin D synthase (199 aa).

Residues 2-79 (PNYKLTYFNM…YLTKNTDLAG (78 aa)) form the GST N-terminal domain. Glutathione contacts are provided by residues tyrosine 8, arginine 14, tryptophan 39, 49–51 (GKI), and 63–64 (QS). The region spanning 81–199 (TEMEQCHVDA…WIKRRPQTKL (119 aa)) is the GST C-terminal domain.

It belongs to the GST superfamily. Sigma family. As to quaternary structure, homodimer. The cofactor is glutathione. As to expression, expressed in a number of megakaryocytic cell lines but not in platelets. Highly expressed in adipose tissue, macrophages and placenta. Also expressed at lower levels in lung, heart, lymph nodes, appendix, bone marrow and fetal liver.

The protein localises to the cytoplasm. It catalyses the reaction prostaglandin H2 = prostaglandin D2. It carries out the reaction RX + glutathione = an S-substituted glutathione + a halide anion + H(+). The catalysed reaction is 2-glyceryl-prostaglandin H2 = 2-glyceryl-prostaglandin D2. With respect to regulation, prostaglandin PGD2 synthesis is stimulated by calcium and magnesium ions. One calcium or magnesium ion is bound between the subunits of the homodimer. The interactions with the protein are for the most part mediated via water molecules. Magnesium increases the affinity for glutathione, while calcium has no effect on the affinity for glutathione. Functionally, bifunctional enzyme which catalyzes both the conversion of PGH2 to PGD2, a prostaglandin involved in smooth muscle contraction/relaxation and a potent inhibitor of platelet aggregation, and the conjugation of glutathione with a wide range of aryl halides and organic isothiocyanates. Also exhibits low glutathione-peroxidase activity towards cumene hydroperoxide. This is Hematopoietic prostaglandin D synthase from Homo sapiens (Human).